The primary structure comprises 1681 residues: Sodium channel protein type 7 subunit alpha (1681 aa).

Topologically, residues 1–118 are cytoplasmic; the sequence is MLTSPEPKGL…RRAAIKALVH (118 aa). The stretch at 101–402 is one I repeat; that stretch reads TLSPLNSLRR…ILTMTYEKEK (302 aa). A helical transmembrane segment spans residues 119–138; sequence PLFRLLILISVLTDSILMCM. Residues 139-142 lie on the Extracellular side of the membrane; it reads SNLP. The helical transmembrane segment at 143 to 168 threads the bilayer; sequence EWILAIENTLLGIYAFEILVKVIARG. Residues 169–179 lie on the Cytoplasmic side of the membrane; sequence IWAGSFSFLGD. A helical membrane pass occupies residues 180–197; it reads LWNWLDFSVTLFELITRF. The Extracellular segment spans residues 198 to 201; it reads SPLS. A helical transmembrane segment spans residues 202 to 220; that stretch reads SFLMLKTIRTFRILKIIPL. At 221-238 the chain is on the cytoplasmic side; sequence NHGLQSIVMTLAQCLKKL. A helical membrane pass occupies residues 239-260; the sequence is FGAIALALFFLAVFSLLGMGLF. The Extracellular segment spans residues 261-339; that stretch reads MGNLKHKCLR…PDNGFTSFDN (79 aa). Cys-268 and Cys-308 are disulfide-bonded. 4 N-linked (GlcNAc...) asparagine glycosylation sites follow: Asn-277, Asn-282, Asn-288, and Asn-310. Positions 340-367 form an intramembrane region, pore-forming; it reads FGWSLLAMFRLMTQDYPELLYHQILYAS. Position 368 (Gly-368) is a topological domain, extracellular. Residues 369–408 form a helical membrane-spanning segment; it reads KVYMIFFVMISFWFAFYLTSLFLGILTMTYEKEKQRACEE. The Cytoplasmic portion of the chain corresponds to 409–506; that stretch reads SGGLDPKCQQ…EFADRVITHP (98 aa). Residues 488–757 form an II repeat; the sequence is CSPCWVKLNE…QLAMARIKSG (270 aa). The chain crosses the membrane as a helical span at residues 507–522; sequence LADLFLVICIVLNICF. Residues 523-531 are Extracellular-facing; it reads LALEHFPMS. A helical transmembrane segment spans residues 532-560; the sequence is EELRSLLHVGNLVFIGIYTIEMILKIIAM. Topologically, residues 561–569 are cytoplasmic; it reads HPYGYFQIS. Residues 570 to 587 traverse the membrane as a helical segment; the sequence is WNIFDSILVVLELTEILL. Topologically, residues 588–593 are extracellular; it reads ADVEGL. The helical transmembrane segment at 594-609 threads the bilayer; sequence AVLITVPLIFIKLGKY. Over 610 to 626 the chain is Cytoplasmic; the sequence is GPPFKSLMRILGSSLMA. Residues 627-655 traverse the membrane as a helical segment; sequence LKDLVLLLCIFVYFSAVFGMKLFGRSYKD. The Extracellular portion of the chain corresponds to 656–673; sequence CVCHIKEDCQPQRWHMSD. Intrachain disulfides connect Cys-658–Cys-664 and Cys-696–Cys-705. The segment at residues 674–700 is an intramembrane region (pore-forming); that stretch reads FLHAYMTVFRILCGEWIETLWECMEVA. Residue Gly-701 is a topological domain, extracellular. Residues 702-732 form a helical membrane-spanning segment; it reads QAWCIPFYMMVILIGNLLILYLFVTLVSSFS. The Cytoplasmic portion of the chain corresponds to 733–934; that stretch reads YYDATSEVNK…KTCCKIVENS (202 aa). Over residues 806-834 the composition is skewed to polar residues; that stretch reads YKDQSSSTEKTPVTESESQSLIASPSASE. Positions 806–875 are disordered; that stretch reads YKDQSSSTEK…MKQSSSSECS (70 aa). Ser-843 carries the post-translational modification Phosphoserine. The stretch at 916 to 1224 is one III repeat; that stretch reads NGKIWKNIRK…KKQYRALKKL (309 aa). The helical transmembrane segment at 935-953 threads the bilayer; that stretch reads WFECFIGLVTLLCTGTLAL. Topologically, residues 954 to 961 are extracellular; sequence EDIYIDQR. Residues 962 to 990 traverse the membrane as a helical segment; the sequence is KTTKILLEYADMIFAYIFILEMLLKWVAY. Over 991–998 the chain is Cytoplasmic; the sequence is GFKAFFSN. A helical transmembrane segment spans residues 999-1020; the sequence is NWYKLDFMVVIVFCLSLIGKTR. Position 1021 (Glu-1021) is a topological domain, extracellular. A helical transmembrane segment spans residues 1022-1040; the sequence is DLNPLTSIKFLRALRVLSQ. Residues 1041–1055 lie on the Cytoplasmic side of the membrane; sequence FERMKVVLRALIKTT. Residues 1056 to 1080 form a helical membrane-spanning segment; that stretch reads LPTVSVFLVCLMIWLLFSVIGVQLF. At 1081–1127 the chain is on the extracellular side; the sequence is AGKFYECIDPTKGERFPVFEVMNKSQCEKLLFNESMPWENAKLNFDN. Cys-1087 and Cys-1107 are disulfide-bonded. 2 N-linked (GlcNAc...) asparagine glycosylation sites follow: Asn-1103 and Asn-1113. Residues 1128–1154 constitute an intramembrane region (pore-forming); the sequence is VGNGFLSLLQVATFNGWISIMNSAIDS. The Extracellular segment spans residues 1155 to 1167; it reads VGVNMQPSFEYNL. Residues 1168-1202 traverse the membrane as a helical segment; it reads YMYSYFIIFVIFGLFLPLCMLIGVIIRNFNKQKIK. Over 1203 to 1250 the chain is Cytoplasmic; sequence QGGSNIFITVKQKKQYRALKKLLYADVQKPTPRPRNKFQGFLFDLVTH. The stretch at 1233 to 1531 is one IV repeat; sequence TPRPRNKFQG…WNRFDPDRTQ (299 aa). Residues 1251–1272 traverse the membrane as a helical segment; that stretch reads RVFNVIIILLICFQATTIMIQK. Topologically, residues 1273 to 1276 are extracellular; the sequence is DEQS. Residues 1277-1305 form a helical membrane-spanning segment; sequence PQMETAIFWMNSIFVMLFTLECILKLTAF. Topologically, residues 1306 to 1312 are cytoplasmic; that stretch reads RCHYFTS. The helical transmembrane segment at 1313-1338 threads the bilayer; the sequence is AWNVHDFMVVIFSITGLLLPLTIGQY. The Extracellular portion of the chain corresponds to 1339 to 1341; sequence FVP. Residues 1342–1362 form a helical membrane-spanning segment; that stretch reads PSLVQLILLSRVIHILRPGKG. The Cytoplasmic portion of the chain corresponds to 1363–1377; that stretch reads PKVFHDLMLPLILAL. A helical transmembrane segment spans residues 1378 to 1402; sequence PALLNISLLIFLVMFIYAIFGMYNF. Topologically, residues 1403–1420 are extracellular; the sequence is AYVKKEAGINDVSNFETF. The segment at residues 1421–1444 is an intramembrane region (pore-forming); sequence GSSMLCLFQVTTFSGWDGMLDAIF. Residues 1445–1468 are Extracellular-facing; the sequence is NSQWSDCDPDKINPGTQVKGDCGS. Cys-1451 and Cys-1466 form a disulfide bridge. The helical transmembrane segment at 1469–1504 threads the bilayer; that stretch reads PSVGISYFVSYILISWLIIVNMYIVLIMEFLSIPSQ. Residues 1505 to 1681 are Cytoplasmic-facing; it reads KKSRTLSEDD…EEKASIQTQI (177 aa). Residues 1647 to 1662 show a composition bias toward basic and acidic residues; it reads NVSDTPAIDDRRDDLT. Residues 1647–1681 form a disordered region; the sequence is NVSDTPAIDDRRDDLTSKGAHSGKIEEKASIQTQI.

The protein belongs to the sodium channel (TC 1.A.1.10) family. SCN7A subfamily. As to quaternary structure, the sodium channel formed by SCN7A is probably a heterooligomeric complex consisting of the ion conducting pore forming alpha subunit SCN7A and regulatory beta subunits such as SCN3B. Interacts with ATP1A1; activates ATP1A1 and thereby indirectly signals to nearby neurons to regulate sodium homeostasis. As to expression, not tissue specific but widely expressed. Expressed in regions of the central nervous system that control body fluid ionic balance.

It is found in the cell membrane. It catalyses the reaction Na(+)(in) = Na(+)(out). In terms of biological role, sodium leak channel functioning as an osmosensor regulating sodium ion levels in various tissues and organs. While most sodium channels are voltage-gated, SCN7A is not and lets sodium flow through membrane along its concentration gradient. In glial cells of the central nervous system, senses body-fluid sodium levels and controls salt intake behavior as well as voluntary water intake through activation of nearby neurons to maintain appropriate sodium levels in the body. By mediating sodium influx into keratinocytes, also plays a role in skin barrier homeostasis. The polypeptide is Sodium channel protein type 7 subunit alpha (Mus musculus (Mouse)).